The chain runs to 88 residues: RNA-binding protein Hfq (88 aa).

The Sm domain maps to 10–70 (DRFLNILRTK…ISTILPAEYI (61 aa)).

Belongs to the Hfq family. Homohexamer.

In terms of biological role, RNA chaperone that binds small regulatory RNA (sRNAs) and mRNAs to facilitate mRNA translational regulation in response to envelope stress, environmental stress and changes in metabolite concentrations. Also binds with high specificity to tRNAs. The sequence is that of RNA-binding protein Hfq from Fervidobacterium nodosum (strain ATCC 35602 / DSM 5306 / Rt17-B1).